Here is a 292-residue protein sequence, read N- to C-terminus: High-affinity heme uptake system protein IsdE (292 aa).

Residues 1 to 19 (MRIIKYLTILVISVVILTS) form the signal peptide. Cysteine 20 carries the N-palmitoyl cysteine lipid modification. The S-diacylglycerol cysteine moiety is linked to residue cysteine 20. Residues 35-291 (RIVPTTVALT…QLYDLFYKDK (257 aa)) enclose the Fe/B12 periplasmic-binding domain. Heme contacts are provided by valine 41, alanine 42, serine 60, tyrosine 61, methionine 78, and histidine 229.

Belongs to the bacterial solute-binding protein 8 family. It depends on heme b as a cofactor.

It localises to the cell membrane. Functionally, involved in heme (porphyrin) scavenging. Binds Fe(2+) and Fe(3+) heme but the largest fraction is Fe(2+) heme. Functions as a high-affinity heme binding protein and probably has a role in relaying heme-iron from cell wall-anchored isd proteins receptors to the probable permease IsdF. The protein is High-affinity heme uptake system protein IsdE (isdE) of Staphylococcus aureus (strain MRSA252).